Consider the following 426-residue polypeptide: MTKFETVRGMKDYIGIDAEKIRYLESIFRDLAIKYGYSEIITPVVEEFKLFALKGGEELRETMYVFKDKADRELSLRPEITPSVARAYIQNLQSSPKPIRLFYFGTVYRYDEPQYGRYREFRQAGIEMIGDSSILADLEVLDLLYNFYDKLNLSNDIIIKINNIGIFRKIMDKYNIEDNLQEHILHLIDKNKINEALDILEKNLKNKDIIDFFNKILTKKDTKLEDIESLAELEEVSRLDIKSEFLYLFRLSRILSNLNIKFKIDLGFVRGLAYYTGLIFEVLHPSVQFSIAGGGRYDKLIELYGGLPSPAIGFAIGVERTLLVIKDLKVEEPVNVIVIGMSEDTIPSMFMVSRILRKEEYKVVINTKDQPLSKLLPYYASQGFKVAIIIGKQELEKNMITVRNLITRKQISVPLENIEDAIKQTL.

Belongs to the class-II aminoacyl-tRNA synthetase family.

The protein resides in the cytoplasm. The enzyme catalyses tRNA(His) + L-histidine + ATP = L-histidyl-tRNA(His) + AMP + diphosphate + H(+). In Saccharolobus islandicus (strain M.16.27) (Sulfolobus islandicus), this protein is Histidine--tRNA ligase.